Reading from the N-terminus, the 244-residue chain is Homeobox-leucine zipper protein HOX14 (244 aa).

The segment at 25 to 64 is disordered; the sequence is ASGEVQGERPRARRRRRRGARCVGGGGGGGEVDGGDPKKR. Over residues 35–44 the composition is skewed to basic residues; that stretch reads RARRRRRRGA. Over residues 46 to 56 the composition is skewed to gly residues; the sequence is CVGGGGGGGEV. The segment at residues 59-118 is a DNA-binding region (homeobox); it reads GDPKKRRLSDEQVEMLELSFREERKLETGRKVHLASELGLDPKQVAVWFQNRRARHKSKL. Positions 108-167 form a coiled coil; the sequence is QNRRARHKSKLLEEEFSKLKHAHDAAILHKCHLENEVLRLKERLVVAEEEVRRLRSAAGS.

This sequence belongs to the HD-ZIP homeobox family. Class I subfamily. In terms of tissue distribution, expressed in roots, stems, leaf blades and panicles.

It is found in the nucleus. Its function is as follows. Probable transcription factor. The polypeptide is Homeobox-leucine zipper protein HOX14 (HOX14) (Oryza sativa subsp. indica (Rice)).